Reading from the N-terminus, the 328-residue chain is D-cysteine desulfhydrase (328 aa).

K51 carries the post-translational modification N6-(pyridoxal phosphate)lysine.

This sequence belongs to the ACC deaminase/D-cysteine desulfhydrase family. As to quaternary structure, homodimer. The cofactor is pyridoxal 5'-phosphate.

It carries out the reaction D-cysteine + H2O = hydrogen sulfide + pyruvate + NH4(+) + H(+). Catalyzes the alpha,beta-elimination reaction of D-cysteine and of several D-cysteine derivatives. It could be a defense mechanism against D-cysteine. The sequence is that of D-cysteine desulfhydrase from Escherichia coli O157:H7.